We begin with the raw amino-acid sequence, 221 residues long: Uracil-DNA glycosylase 1 (221 aa).

Aspartate 61 acts as the Proton acceptor in catalysis.

The protein belongs to the uracil-DNA glycosylase (UDG) superfamily. UNG family.

Its subcellular location is the cytoplasm. The enzyme catalyses Hydrolyzes single-stranded DNA or mismatched double-stranded DNA and polynucleotides, releasing free uracil.. In terms of biological role, excises uracil residues from the DNA which can arise as a result of misincorporation of dUMP residues by DNA polymerase or due to deamination of cytosine. The protein is Uracil-DNA glycosylase 1 of Listeria monocytogenes serovar 1/2a (strain ATCC BAA-679 / EGD-e).